The sequence spans 105 residues: Small ribosomal subunit protein eS24 (105 aa).

This sequence belongs to the eukaryotic ribosomal protein eS24 family.

In Ignicoccus hospitalis (strain KIN4/I / DSM 18386 / JCM 14125), this protein is Small ribosomal subunit protein eS24.